The primary structure comprises 206 residues: Pyrrolidone-carboxylate peptidase (206 aa).

Residues E78, C141, and H165 contribute to the active site.

Belongs to the peptidase C15 family. Homotetramer.

The protein localises to the cytoplasm. It carries out the reaction Release of an N-terminal pyroglutamyl group from a polypeptide, the second amino acid generally not being Pro.. Its function is as follows. Removes 5-oxoproline from various penultimate amino acid residues except L-proline. The protein is Pyrrolidone-carboxylate peptidase of Thermococcus kodakarensis (strain ATCC BAA-918 / JCM 12380 / KOD1) (Pyrococcus kodakaraensis (strain KOD1)).